A 385-amino-acid polypeptide reads, in one-letter code: Transcription termination factor 2, mitochondrial (385 aa).

The transit peptide at 1–35 (MSWRLLTGYQLCRLRLFRKPQPALKIRPSSVCVTY) directs the protein to the mitochondrion.

This sequence belongs to the mTERF family. Monomer.

It is found in the mitochondrion matrix. It localises to the mitochondrion nucleoid. Functionally, binds mitochondrial DNA and plays a role in the regulation of transcription of mitochondrial mRNA and rRNA species. This Rattus norvegicus (Rat) protein is Transcription termination factor 2, mitochondrial (Mterf2).